We begin with the raw amino-acid sequence, 156 residues long: Endogenous retrovirus group K member 8 Pro protein (156 aa).

In terms of domain architecture, Peptidase A2 spans 21–96; sequence FEGLVDTGAD…IPLNLWGRDL (76 aa). Residue D26 is part of the active site. Residues 111-156 enclose the G-patch domain; that stretch reads YSPTSQKIMTKRGYIPGKGLGKNEDGIKIPFEAKINQKREGIGYPF.

It belongs to the peptidase A2 family. HERV class-II K(HML-2) subfamily. Active as a homodimer. In terms of processing, autoproteolytically processed at the N-terminus. Expected C-terminal autoprocessing not detected. The sequence shown is that of the processed Pro protein.

The catalysed reaction is Processing at the authentic HIV-1 PR recognition site and release of the mature p17 matrix and the p24 capsid protein, as a result of the cleavage of the -SQNY-|-PIVQ- cleavage site.. Functionally, retroviral proteases have roles in the processing of the primary translation products and the maturation of the viral particle. Endogenous Pro proteins may have kept, lost or modified their original function during evolution. This Homo sapiens (Human) protein is Endogenous retrovirus group K member 8 Pro protein (ERVK-8).